Consider the following 456-residue polypeptide: Adenylosuccinate synthetase isozyme 2 (456 aa).

The interval Met1–Arg24 is disordered. Residues Gly39–Lys45 and Gly67–Thr69 contribute to the GTP site. Asp40 serves as the catalytic Proton acceptor. Residues Asp40 and Gly67 each contribute to the Mg(2+) site. Asp40 serves as a coordination point for substrate. Residues Asp40–Lys43, Asn65–His68, Thr162, Arg176, Asn255, Thr270, and Arg334 each bind IMP. His68 acts as the Proton donor in catalysis. Val330–Arg336 is a binding site for substrate. GTP is bound by residues Arg336, Lys362–Asp364, and Gly444–Lys447.

This sequence belongs to the adenylosuccinate synthetase family. In terms of assembly, homodimer. It depends on Mg(2+) as a cofactor. Widely expressed.

The protein resides in the cytoplasm. The protein localises to the mitochondrion. It catalyses the reaction IMP + L-aspartate + GTP = N(6)-(1,2-dicarboxyethyl)-AMP + GDP + phosphate + 2 H(+). The protein operates within purine metabolism; AMP biosynthesis via de novo pathway; AMP from IMP: step 1/2. Inhibited competitively by AMP and IMP and non-competitively by fructose 1,6-bisphosphate. Plays an important role in the de novo pathway and in the salvage pathway of purine nucleotide biosynthesis. Catalyzes the first committed step in the biosynthesis of AMP from IMP. This Sus scrofa (Pig) protein is Adenylosuccinate synthetase isozyme 2.